The chain runs to 356 residues: MVPPTAVAEANAVATKDPVKDTILTPRFYTTDFDDMAAMDLRPNEAELEAICEEFRKDYNRHHFVRNDDFDGAADKLDPETRRVFVEFLEQSCTSEFSGFLLYKELSRRIKQQNPLLAECFAHMARDEARHAGFLNKAMSDFGMQLDLGFLTANKDYTFFQPKFIFYATYLSEKIGYWRYIAIYRHLEKNPESKIFPIFNFFENWCQDENRHGDFFDALMKSQPDTVRGPIAKLWCRFFLLAVFATMYVRDVARKEFYEALGLDARTYDKMVIEKTNETTARVFPVVLDVNNPKFWTRLERLVENNAALEAADRSSSPAPLKLFKKLPRWISNGAEMAKLFLMSPIDSAKFQPAVR.

The protein belongs to the AcsF family. Fe cation serves as cofactor.

It catalyses the reaction Mg-protoporphyrin IX 13-monomethyl ester + 3 NADPH + 3 O2 + 2 H(+) = 3,8-divinyl protochlorophyllide a + 3 NADP(+) + 5 H2O. Its pathway is porphyrin-containing compound metabolism; chlorophyll biosynthesis (light-independent). In terms of biological role, catalyzes the formation of the isocyclic ring in chlorophyll biosynthesis. Mediates the cyclase reaction, which results in the formation of divinylprotochlorophyllide (Pchlide) characteristic of all chlorophylls from magnesium-protoporphyrin IX 13-monomethyl ester (MgPMME). The protein is Magnesium-protoporphyrin IX monomethyl ester [oxidative] cyclase of Parasynechococcus marenigrum (strain WH8102).